A 282-amino-acid chain; its full sequence is Shikimate dehydrogenase (NADP(+)) (282 aa).

Shikimate contacts are provided by residues 19–21 (SFS) and T66. The Proton acceptor role is filled by K70. Residues N91 and D106 each coordinate shikimate. Residues 130–134 (GAGGA), 152–157 (NRTVEK), T196, M200, and L224 contribute to the NADP(+) site. Y226 contributes to the shikimate binding site. G247 is an NADP(+) binding site.

Belongs to the shikimate dehydrogenase family. Homodimer.

The enzyme catalyses shikimate + NADP(+) = 3-dehydroshikimate + NADPH + H(+). Its pathway is metabolic intermediate biosynthesis; chorismate biosynthesis; chorismate from D-erythrose 4-phosphate and phosphoenolpyruvate: step 4/7. In terms of biological role, involved in the biosynthesis of the chorismate, which leads to the biosynthesis of aromatic amino acids. Catalyzes the reversible NADPH linked reduction of 3-dehydroshikimate (DHSA) to yield shikimate (SA). The protein is Shikimate dehydrogenase (NADP(+)) of Methanocaldococcus jannaschii (strain ATCC 43067 / DSM 2661 / JAL-1 / JCM 10045 / NBRC 100440) (Methanococcus jannaschii).